Consider the following 559-residue polypeptide: DNA ligase (559 aa).

ATP is bound at residue Glu-248. Residue Lys-250 is the N6-AMP-lysine intermediate of the active site. Positions 255, 270, 300, 341, 417, and 423 each coordinate ATP.

This sequence belongs to the ATP-dependent DNA ligase family. Mg(2+) serves as cofactor.

The catalysed reaction is ATP + (deoxyribonucleotide)n-3'-hydroxyl + 5'-phospho-(deoxyribonucleotide)m = (deoxyribonucleotide)n+m + AMP + diphosphate.. In terms of biological role, DNA ligase that seals nicks in double-stranded DNA during DNA replication, DNA recombination and DNA repair. This chain is DNA ligase, found in Methanopyrus kandleri (strain AV19 / DSM 6324 / JCM 9639 / NBRC 100938).